A 301-amino-acid chain; its full sequence is Protein FdhE homolog (301 aa).

It belongs to the FdhE family.

The protein resides in the cytoplasm. Its function is as follows. Necessary for formate dehydrogenase activity. The chain is Protein FdhE homolog from Shewanella baltica (strain OS223).